A 436-amino-acid polypeptide reads, in one-letter code: Enolase (436 aa).

Residues H159 and E168 each coordinate substrate. Catalysis depends on E211, which acts as the Proton donor. The Mg(2+) site is built by D246, E295, and D320. The substrate site is built by E295 and D320. The Proton acceptor role is filled by K345. Substrate-binding positions include 372-375 (SHRS) and K396.

The protein belongs to the enolase family. As to quaternary structure, homodimer. It depends on Mg(2+) as a cofactor.

The protein localises to the cytoplasm. It carries out the reaction (2R)-2-phosphoglycerate = phosphoenolpyruvate + H2O. It functions in the pathway carbohydrate degradation; glycolysis; pyruvate from D-glyceraldehyde 3-phosphate: step 4/5. The polypeptide is Enolase (Cunninghamella elegans).